The sequence spans 229 residues: MDRLLLVLLSSASLLLTVYGIKHHIVTKSWSEAQSDCLQYLRVESPGRYLSHRYRDNQTSKQLIFCIILNLRIYDPTQNVLRLKAMGQFFNPDKTDTLYVNRTNACLLRVKVPPLVDSSEDSQLYSGVMGTLYEVFRCFYHCYGNINAIAPKLPPTVLELEKIQQECARMVGVSERLLDGGLQLSSHPRYSKLPRCIMLRSGGSVDYLTHRNNSSRRFKLKKNVENDTL.

An N-terminal signal peptide occupies residues 1–20 (MDRLLLVLLSSASLLLTVYG). Cys-66 and Cys-106 are disulfide-bonded.

It belongs to the PBP/GOBP family.

The protein resides in the secreted. Present in the aqueous fluid surrounding olfactory sensory dendrites and are thought to aid in the capture and transport of hydrophobic odorants into and through this fluid. The polypeptide is General odorant-binding protein 69 (Obp69) (Anopheles gambiae (African malaria mosquito)).